The chain runs to 281 residues: Protein ZAR1-like 1.L (281 aa).

The 3CxxC-type zinc finger occupies Gln183–Gln267.

This sequence belongs to the ZAR1 family. In terms of assembly, component of a cytoplasmic ribonucleoprotein complex together with eif4enif1/4E-T and cpeb1. As to expression, expressed in oocytes.

The protein resides in the cytoplasm. It is found in the cytoplasmic ribonucleoprotein granule. Functionally, mRNA-binding protein required for maternal mRNA storage, translation and degradation during oocyte maturation. Controls timing of meiosis during oogenesis. Probably promotes formation of some phase-separated membraneless compartment that stores maternal mRNAs in oocytes: acts by undergoing liquid-liquid phase separation upon binding to maternal mRNAs. Binds to the 3'-UTR of maternal mRNAs, inhibiting their translation. This Xenopus laevis (African clawed frog) protein is Protein ZAR1-like 1.L.